The primary structure comprises 449 residues: Tubulin beta chain (449 aa).

GTP contacts are provided by Gln-11, Glu-71, Ser-140, Gly-144, Thr-145, Gly-146, Asn-206, and Asn-228. Residue Glu-71 coordinates Mg(2+).

This sequence belongs to the tubulin family. In terms of assembly, dimer of alpha and beta chains. A typical microtubule is a hollow water-filled tube with an outer diameter of 25 nm and an inner diameter of 15 nM. Alpha-beta heterodimers associate head-to-tail to form protofilaments running lengthwise along the microtubule wall with the beta-tubulin subunit facing the microtubule plus end conferring a structural polarity. Microtubules usually have 13 protofilaments but different protofilament numbers can be found in some organisms and specialized cells. Requires Mg(2+) as cofactor.

The protein resides in the cytoplasm. Its subcellular location is the cytoskeleton. Functionally, tubulin is the major constituent of microtubules, a cylinder consisting of laterally associated linear protofilaments composed of alpha- and beta-tubulin heterodimers. Microtubules grow by the addition of GTP-tubulin dimers to the microtubule end, where a stabilizing cap forms. Below the cap, tubulin dimers are in GDP-bound state, owing to GTPase activity of alpha-tubulin. In Cicer arietinum (Chickpea), this protein is Tubulin beta chain (TUBB).